The primary structure comprises 421 residues: CinA-like protein (421 aa).

It belongs to the CinA family.

The chain is CinA-like protein from Mycobacterium sp. (strain MCS).